Consider the following 91-residue polypeptide: Small ribosomal subunit protein uS19 (91 aa).

This sequence belongs to the universal ribosomal protein uS19 family.

Its function is as follows. Protein S19 forms a complex with S13 that binds strongly to the 16S ribosomal RNA. This is Small ribosomal subunit protein uS19 from Pseudomonas syringae pv. syringae (strain B728a).